Consider the following 112-residue polypeptide: Ribonuclease P protein component (112 aa).

The protein belongs to the RnpA family. In terms of assembly, consists of a catalytic RNA component (M1 or rnpB) and a protein subunit.

It catalyses the reaction Endonucleolytic cleavage of RNA, removing 5'-extranucleotides from tRNA precursor.. RNaseP catalyzes the removal of the 5'-leader sequence from pre-tRNA to produce the mature 5'-terminus. It can also cleave other RNA substrates such as 4.5S RNA. The protein component plays an auxiliary but essential role in vivo by binding to the 5'-leader sequence and broadening the substrate specificity of the ribozyme. This chain is Ribonuclease P protein component, found in Mycoplasmopsis synoviae (strain 53) (Mycoplasma synoviae).